The primary structure comprises 314 residues: tRNA pseudouridine synthase B (314 aa).

Histidine 43 is a substrate binding site. The Nucleophile role is filled by aspartate 48. Positions 76, 179, and 200 each coordinate substrate.

Belongs to the pseudouridine synthase TruB family. Type 1 subfamily.

It carries out the reaction uridine(55) in tRNA = pseudouridine(55) in tRNA. Its function is as follows. Responsible for synthesis of pseudouridine from uracil-55 in the psi GC loop of transfer RNAs. This is tRNA pseudouridine synthase B from Pectobacterium atrosepticum (strain SCRI 1043 / ATCC BAA-672) (Erwinia carotovora subsp. atroseptica).